Consider the following 296-residue polypeptide: 4-hydroxybenzoate octaprenyltransferase (296 aa).

8 helical membrane-spanning segments follow: residues 28–48, 52–72, 102–122, 146–166, 169–189, 219–239, 241–261, and 275–295; these read PIGI…AAEG, LSHV…GCAI, ALIL…CTNA, YYPQ…TFTA, GELP…TVGY, VIIL…GARF, LGGW…WEFW, and FLHN…DYAL.

The protein belongs to the UbiA prenyltransferase family. Mg(2+) serves as cofactor.

It localises to the cell inner membrane. It catalyses the reaction all-trans-octaprenyl diphosphate + 4-hydroxybenzoate = 4-hydroxy-3-(all-trans-octaprenyl)benzoate + diphosphate. It participates in cofactor biosynthesis; ubiquinone biosynthesis. Its function is as follows. Catalyzes the prenylation of para-hydroxybenzoate (PHB) with an all-trans polyprenyl group. Mediates the second step in the final reaction sequence of ubiquinone-8 (UQ-8) biosynthesis, which is the condensation of the polyisoprenoid side chain with PHB, generating the first membrane-bound Q intermediate 3-octaprenyl-4-hydroxybenzoate. The sequence is that of 4-hydroxybenzoate octaprenyltransferase from Pseudomonas fluorescens (strain ATCC BAA-477 / NRRL B-23932 / Pf-5).